Reading from the N-terminus, the 330-residue chain is MKTAYIAKQRQISFVKSHFSRQLEERLGLIEVQAPILSRVGDGTQDNLSGCEKAVQVKVKALPDAQFEVVHSLAKWKRQTLGQHDFSAGEGLYTHMKALRPDEDRLSPLHSVYVDQWDWERVMGDGERQFSTLKSTVEAIWGGIKATEAAVSEEFGLAPFLPDQIHFVHSQELLSRYPDLDAKGRERAIAKDLGAVFLVGIGGKLSDGHRHDVRAPDYDDWSTPSELGHAGLNGDILVWNPVLEDAFELSSMGIRVDADTLKHQLALTGDEDRLELEWHQALLRGEMPQTIGGGIGQSRLTMLLLQLPHIGQVQCGVWPAAVRESVPSLL.

The protein belongs to the class-II aminoacyl-tRNA synthetase family. AsnA subfamily.

The protein resides in the cytoplasm. It carries out the reaction L-aspartate + NH4(+) + ATP = L-asparagine + AMP + diphosphate + H(+). The protein operates within amino-acid biosynthesis; L-asparagine biosynthesis; L-asparagine from L-aspartate (ammonia route): step 1/1. In Escherichia coli O127:H6 (strain E2348/69 / EPEC), this protein is Aspartate--ammonia ligase.